Here is a 231-residue protein sequence, read N- to C-terminus: UPF0173 metal-dependent hydrolase AF_1265 (231 aa).

This sequence belongs to the UPF0173 family.

The chain is UPF0173 metal-dependent hydrolase AF_1265 from Archaeoglobus fulgidus (strain ATCC 49558 / DSM 4304 / JCM 9628 / NBRC 100126 / VC-16).